The chain runs to 275 residues: Phospholipid scramblase (275 aa).

A helical transmembrane segment spans residues 256 to 272; that stretch reads WKMMLLAFALFLDYMYY.

It belongs to the phospholipid scramblase family. In terms of assembly, forms homooligomers in the presence of calcium. Requires Ca(2+) as cofactor. It depends on Mg(2+) as a cofactor.

It is found in the membrane. The protein resides in the cell membrane. It carries out the reaction a 1,2-diacyl-sn-glycero-3-phosphoethanolamine(in) = a 1,2-diacyl-sn-glycero-3-phosphoethanolamine(out). Catalyzes calcium-induced ATP-independent rapid bidirectional and non-specific movement of phospholipids (lipid scrambling or lipid flip-flop) between the inner and outer leaflet of the plasma membrane resulting in collapse of the phospholipid asymmetry. Preferentially, mediates calcium-dependent phosphatidylethanolamine externalization. During the liver stage, plays a role in the interaction with, and thus invasion of, host hepatocytes. Dispensable for host erythrocyte invasion and asexual parasite development. This Plasmodium falciparum (isolate 3D7) protein is Phospholipid scramblase.